The primary structure comprises 393 residues: DNA-directed RNA polymerase subunit Rpo1C (393 aa).

This sequence belongs to the RNA polymerase beta' chain family. Part of the RNA polymerase complex.

The protein localises to the cytoplasm. The catalysed reaction is RNA(n) + a ribonucleoside 5'-triphosphate = RNA(n+1) + diphosphate. Its function is as follows. DNA-dependent RNA polymerase (RNAP) catalyzes the transcription of DNA into RNA using the four ribonucleoside triphosphates as substrates. Forms part of the jaw domain. The polypeptide is DNA-directed RNA polymerase subunit Rpo1C (Halococcus morrhuae (Micrococcus morrhuae)).